An 839-amino-acid chain; its full sequence is MAAEGEQRATSDVTKALARHLNCLNDENKMIRRRALAAIQKEAADEKLASAVLQHVFLELLKPLLRCLSDPMEKCRELSIQIIVYCVSHVPRPEEALPYLMPALTQRLGQQQLVELSEELRLAMVELLTLLVEVCGKKLAPYLDEMIQIFQRTMVDPFPDVKKESCKCASNYATCIPEHFHMQAESLIKPLMQTISHQHSKVRVAVIQTTGTVIQYSSGKSVDDVLSHLAQRLFDDSVQVRQAVTVVVGDWLLKLQDRYSFFHKLIPLLLSSTTDEIPEIRKLALDYWEKIGSQWEKENEEDLKDKLDFSAPCPSYYPAGVQRPGLGCRELIFRNLSKILPAISRDVTNWVAGTRIKSSQLLAVLLLHGEDHITQHMELLLSTLYHSCLDEENQVVINSVKSAELIGTFVNPEVFLKLILSALQKSPLASHLMTLAACIRGCSREMLKTHLTKITSVISQSDVCQGSERVLYQEQLLCCIQSLIDVCQQDCTEVSLQCMNVLITILASPASESLHKKVQDTLLSLSEVQGLNGPHDLYRQHMQQLLDWVSQSHNHWTSYSVEQRQFEVIATESGPVMGETLHLFVPILKMCLQPTREPQMRLKLFTMLSKLLLKASETVNSQGQLHRYSESFINDMIVPNLKWQAGRTAGAIRTVAVSCLWVLLQSETLSQQEILQVEDNLMPRVITTLEEDSKMCRLMSCCIITALLSTCERQLRPDKLNKIYPELLKRLDDASDEVRVAAAKTLYQWFKCITDEYERTTYKGHLEFLYRGLLVHLDDPDASLQLIVLDLLKEGSAVCPSLLVQEIEAVRHKHRSPAYCDQLLHYIQKYTSPTPTECT.

11 HEAT repeats span residues 10-48 (TSDV…DEKL), 54-92 (QHVF…HVPR), 94-137 (EEAL…VCGK), 140-178 (APYL…CIPE), 181-219 (HMQA…YSSG), 221-257 (SVDD…KLQD), 259-297 (YSFF…QWEK), 578-617 (GETL…KASE), 675-713 (LQVE…TCER), 717-755 (PDKL…CITD), and 723-761 (IYPE…ERTT).

It belongs to the DNAAF5 family. In terms of assembly, interacts with DNAI2; probably involved in outer arm dynein assembly.

It localises to the cytoplasm. The protein resides in the dynein axonemal particle. Its function is as follows. Cytoplasmic protein involved in the delivery of the dynein machinery to the motile cilium. It is required for the assembly of the axonemal dynein inner and outer arms, two structures attached to the peripheral outer doublet A microtubule of the axoneme, that play a crucial role in cilium motility. The sequence is that of Dynein axonemal assembly factor 5 from Xenopus laevis (African clawed frog).